The sequence spans 172 residues: Protein-export protein SecB (172 aa).

It belongs to the SecB family. In terms of assembly, homotetramer, a dimer of dimers. One homotetramer interacts with 1 SecA dimer.

The protein resides in the cytoplasm. In terms of biological role, one of the proteins required for the normal export of preproteins out of the cell cytoplasm. It is a molecular chaperone that binds to a subset of precursor proteins, maintaining them in a translocation-competent state. It also specifically binds to its receptor SecA. The chain is Protein-export protein SecB from Stenotrophomonas maltophilia (strain K279a).